The chain runs to 36 residues: Pancreatic polypeptide (36 aa).

Tyrosine amide is present on tyrosine 36.

Belongs to the NPY family.

It localises to the secreted. In terms of biological role, hormone secreted by pancreatic cells that acts as a regulator of pancreatic and gastrointestinal functions. The chain is Pancreatic polypeptide (PPY) from Larus argentatus (Herring gull).